A 252-amino-acid chain; its full sequence is uncharacterized protein (252 aa).

Polar residues-rich tracts occupy residues 108-122 (RTTM…SSSE) and 136-153 (MPNT…NSQS). Positions 108–252 (RTTMRQGRFP…LIWNDSSSSK (145 aa)) are disordered. The segment covering 154–172 (TEKEDAMYSKDNGFEDRSK) has biased composition (basic and acidic residues). Polar residues predominate over residues 201–226 (VKSTDSAFSGQENSEAFPSRTSNLGS).

The protein localises to the cytoplasm. Its subcellular location is the mitochondrion. It is found in the nucleus. This is an uncharacterized protein from Schizosaccharomyces pombe (strain 972 / ATCC 24843) (Fission yeast).